Reading from the N-terminus, the 752-residue chain is Catalase-peroxidase (752 aa).

The interval M1–T20 is disordered. A cross-link (tryptophyl-tyrosyl-methioninium (Trp-Tyr) (with M-260)) is located at residues W111–Y234. The active-site Proton acceptor is the H112. A cross-link (tryptophyl-tyrosyl-methioninium (Tyr-Met) (with W-111)) is located at residues Y234–M260. Heme b is bound at residue H275.

This sequence belongs to the peroxidase family. Peroxidase/catalase subfamily. In terms of assembly, homodimer or homotetramer. Heme b is required as a cofactor. In terms of processing, formation of the three residue Trp-Tyr-Met cross-link is important for the catalase, but not the peroxidase activity of the enzyme.

The enzyme catalyses H2O2 + AH2 = A + 2 H2O. It catalyses the reaction 2 H2O2 = O2 + 2 H2O. Functionally, bifunctional enzyme with both catalase and broad-spectrum peroxidase activity. The chain is Catalase-peroxidase from Koribacter versatilis (strain Ellin345).